The sequence spans 530 residues: Cytochrome P450 monooxygenase aneG (530 aa).

N-linked (GlcNAc...) asparagine glycosylation occurs at N2. Residues 43–63 (WLSILGFTIGCYYVIYTFYAL) traverse the membrane as a helical segment. N92 carries N-linked (GlcNAc...) asparagine glycosylation. A heme-binding site is contributed by C474.

The protein belongs to the cytochrome P450 family. The cofactor is heme.

The protein localises to the membrane. The catalysed reaction is asperaculane E + reduced [NADPH--hemoprotein reductase] + O2 = asperaculane G + oxidized [NADPH--hemoprotein reductase] + H2O + H(+). It catalyses the reaction asperaculane G + reduced [NADPH--hemoprotein reductase] + O2 = aculene D + oxidized [NADPH--hemoprotein reductase] + CO2 + 2 H2O. The enzyme catalyses asperaculane E + 2 reduced [NADPH--hemoprotein reductase] + 2 O2 = aculene D + 2 oxidized [NADPH--hemoprotein reductase] + CO2 + 3 H2O + H(+). The protein operates within secondary metabolite biosynthesis. Its function is as follows. Cytochrome P450 monooxygenase; part of the gene cluster that mediates the biosynthesis of aculenes, a unique type of norsesquiterpenes that contain a nordaucane skeleton linked to an L-proline moiety and are of mixed biosynthetic origin. The pathway begins with the synthesis of dauca-4,7-diene by the terpene cyclase aneC using farnesyl pyrophosphate (FPP) as substrate. The cytochrome P450 monooxygenase aneF then performs the initial oxidation at C-12 of dauca-4,7-diene to yield asperaculane D. Asperaculane D is substrate of the cytochrome P450 monooxygenase aneD for C-10 hydroxylation to yield asperaculane E. The cytochrome P450 monooxygenase aneG then converts asperaculane E into aculene D via C-2 oxidation. The monomodular nonribosomal peptide synthtase aneB adenylates L-proline and the thiohydrolase aneE transfers this activated L-proline derivative to aculenes D and C to produce respectively aculenes B and A. The dioxygenase aneA converts aculene D into aculene C, and aculene B into aculene A by introducing the 5,6-alkene moiety. Asperculanes A, B, C and F, as well as 14-prolyl asperculane C, might be shunt products of the pathway. The sequence is that of Cytochrome P450 monooxygenase aneG from Aspergillus aculeatus (strain ATCC 16872 / CBS 172.66 / WB 5094).